Consider the following 330-residue polypeptide: 4-hydroxythreonine-4-phosphate dehydrogenase (330 aa).

His-134 and Thr-135 together coordinate substrate. Residues His-164, His-209, and His-264 each contribute to the a divalent metal cation site. 3 residues coordinate substrate: Lys-272, Asn-281, and Arg-290.

The protein belongs to the PdxA family. As to quaternary structure, homodimer. The cofactor is Zn(2+). Requires Mg(2+) as cofactor. Co(2+) is required as a cofactor.

It localises to the cytoplasm. The enzyme catalyses 4-(phosphooxy)-L-threonine + NAD(+) = 3-amino-2-oxopropyl phosphate + CO2 + NADH. Its pathway is cofactor biosynthesis; pyridoxine 5'-phosphate biosynthesis; pyridoxine 5'-phosphate from D-erythrose 4-phosphate: step 4/5. Its function is as follows. Catalyzes the NAD(P)-dependent oxidation of 4-(phosphooxy)-L-threonine (HTP) into 2-amino-3-oxo-4-(phosphooxy)butyric acid which spontaneously decarboxylates to form 3-amino-2-oxopropyl phosphate (AHAP). The polypeptide is 4-hydroxythreonine-4-phosphate dehydrogenase (Pseudoalteromonas translucida (strain TAC 125)).